The following is a 2555-amino-acid chain: Squalestatin hexaketide synthase clz14 (2555 aa).

The disordered stretch occupies residues 1–84; the sequence is MDVSKEAGHH…PNATSTTTTT (84 aa). Over residues 10–84 the composition is skewed to low complexity; that stretch reads HANGFANGNT…PNATSTTTTT (75 aa). Positions 91–511 constitute a Ketosynthase family 3 (KS3) domain; sequence QVPVAICGIG…GSNTHIIIDS (421 aa). Active-site for beta-ketoacyl synthase activity residues include Cys261, His398, and His435. The tract at residues 611–928 is malonyl-CoA:ACP transacylase (MAT) domain; it reads FIFTGQGAQW…LEGIGKLFCF (318 aa). The interval 975 to 1104 is N-terminal hotdog fold; that stretch reads HELLGERSLE…GLVTASVVTS (130 aa). Residues 975–1256 are dehydratase (DH) domain; sequence HELLGERSLE…RGFKCKKTDD (282 aa). The region spanning 975-1260 is the PKS/mFAS DH domain; it reads HELLGERSLE…CKKTDDAFIQ (286 aa). The Proton acceptor; for dehydratase activity role is filled by His1007. A C-terminal hotdog fold region spans residues 1117 to 1260; the sequence is SRKVDTSRWY…CKKTDDAFIQ (144 aa). The active-site Proton donor; for dehydratase activity is Asp1177. A methyltransferase (CMet) domain region spans residues 1424 to 1595; the sequence is SFFQAAGLNK…GFEGAGTVVL (172 aa). Positions 1821–2141 are enoyl reductase (ER) (ER) domain; sequence GMLNTLHWVG…RGVHMGRIVV (321 aa). The interval 2165-2338 is ketoreductase (KR) domain; it reads STYLLTGGMG…PASVIDIAAI (174 aa). Residues 2468–2546 enclose the Carrier domain; sequence IIFAQEIAKR…SLGRLATKRL (79 aa). At Ser2505 the chain carries O-(pantetheine 4'-phosphoryl)serine.

It functions in the pathway secondary metabolite biosynthesis. In terms of biological role, highly reducing polyketide synthase (HR-PKS); part of the gene cluster that mediates the biosynthesis of squalestatin S1 (SQS1, also known as zaragozic acid A), a heavily oxidized fungal polyketide that offers potent cholesterol lowering activity by targeting squalene synthase (SS). SQS1 is composed of a 2,8-dioxobicyclic[3.2.1]octane-3,4,5-tricarboxyclic acid core that is connected to two lipophilic polyketide arms. These initial steps feature the priming of an unusual benzoic acid starter unit onto the highly reducing polyketide synthase clz14, followed by oxaloacetate extension and product release to generate a tricarboxylic acid containing product. The phenylalanine ammonia lyase (PAL) clz10 and the acyl-CoA ligase clz12 are involved in transforming phenylalanine into benzoyl-CoA. The citrate synthase-like protein clz17 is involved in connecting the C-alpha-carbons of the hexaketide chain and oxaloacetate to afford the tricarboxylic acid unit. The potential hydrolytic enzymes, clz11 and clz13, are in close proximity to pks2 and may participate in product release. On the other side, the tetraketide arm is synthesized by a the squalestatin tetraketide synthase clz2 and enzymatically esterified to the core in the last biosynthetic step, by the acetyltransferase clz6. The biosynthesis of the tetraketide must involve 3 rounds of chain extension. After the first and second rounds methyl-transfer occurs, and in all rounds of extension the ketoreductase and dehydratase are active. The enoyl reductase and C-MeT of clz2 are not active in the final round of extension. The acetyltransferase clz6 appears to have a broad substrate selectivity for its acyl CoA substrate, allowing the in vitro synthesis of novel squalestatins. The biosynthesis of SQS1 requires several oxidative steps likely performed by oxidoreductases clz3, clz15 and clz16. Finally, in support of the identification of the cluster as being responsible for SQS1 production, the cluster contains a gene encoding a putative squalene synthase (SS) clz20, suggesting a likely mechanism for self-resistance. The protein is Squalestatin hexaketide synthase clz14 of Cochliobolus lunatus (Filamentous fungus).